A 173-amino-acid polypeptide reads, in one-letter code: Small ribosomal subunit protein uS5 (173 aa).

The region spanning Y18–F81 is the S5 DRBM domain.

The protein belongs to the universal ribosomal protein uS5 family. Part of the 30S ribosomal subunit. Contacts proteins S4 and S8.

Its function is as follows. With S4 and S12 plays an important role in translational accuracy. In terms of biological role, located at the back of the 30S subunit body where it stabilizes the conformation of the head with respect to the body. The chain is Small ribosomal subunit protein uS5 from Treponema denticola (strain ATCC 35405 / DSM 14222 / CIP 103919 / JCM 8153 / KCTC 15104).